The primary structure comprises 159 residues: Protransforming growth factor alpha (159 aa).

The signal sequence occupies residues 1-23; it reads MVPATGQLALLALGILLAVCQAL. Positions 24–38 are cleaved as a propeptide — removed in mature form; sequence ENSTSPLSDSPVAAA. The Extracellular segment spans residues 24–97; it reads ENSTSPLSDS…AVVAASQKKQ (74 aa). The N-linked (GlcNAc...) asparagine glycan is linked to Asn25. An EGF-like domain is found at 44–83; that stretch reads NKCPDSHTQYCFHGTCRFLVQEEKPACVCHSGYVGVRCEH. Cystine bridges form between Cys46–Cys59, Cys54–Cys70, and Cys72–Cys81. The propeptide at 89 to 159 is removed in mature form; the sequence is VVAASQKKQA…TACCHSETVV (71 aa). Residues 98–123 traverse the membrane as a helical segment; sequence AITALVVVSIVALAVLIITCVLIHCC. The Cytoplasmic portion of the chain corresponds to 124–159; sequence QLRKHCEWCRALVCRHEKPSALLKGRTACCHSETVV. S-palmitoyl cysteine attachment occurs at residues Cys152 and Cys153.

In terms of assembly, interacts with the PDZ domains of SDCBP and SNTA1. The interaction with SDCBP, is required for the targeting to the cell surface. In the endoplasmic reticulum, in its immature form (i.e. with a prosegment and lacking full N-glycosylation), interacts with CNIH. In the Golgi apparatus, may form a complex with CNIH and GORASP2. Interacts (via cytoplasmic C-terminal domain) with NKD2. Interacts with MAGI3.

It localises to the secreted. Its subcellular location is the extracellular space. The protein resides in the cell membrane. Functionally, TGF alpha is a mitogenic polypeptide that is able to bind to the EGF receptor/EGFR and to act synergistically with TGF beta to promote anchorage-independent cell proliferation in soft agar. This Mus musculus (Mouse) protein is Protransforming growth factor alpha (Tgfa).